We begin with the raw amino-acid sequence, 219 residues long: Lipid transferase CIDEB (219 aa).

The CIDE-N domain occupies 33-110 (PRQRPFRVCD…VLELGQSWSP (78 aa)).

Belongs to the CIDE family. In terms of assembly, interacts with DFFA. Interacts with DFFB; inhibited by DFFB. Interacts with APOB. Interacts with PREB/SEC12; facilitating loading of SCAP-SREBP into COPII vesicles.

It is found in the lipid droplet. The protein localises to the endoplasmic reticulum membrane. Its subcellular location is the golgi apparatus. The protein resides in the cytoplasmic vesicle. It localises to the COPI-coated vesicle. Lipid transferase specifically expressed in hepatocytes, which promotes unilocular lipid droplet formation by mediating lipid droplet fusion. Lipid droplet fusion promotes their enlargement, restricting lipolysis and favoring lipid storage. Localizes on the lipid droplet surface, at focal contact sites between lipid droplets, and mediates atypical lipid droplet fusion by promoting directional net neutral lipid transfer from the smaller to larger lipid droplets. The transfer direction may be driven by the internal pressure difference between the contacting lipid droplet pair. Promotes lipid exchange and lipid droplet fusion in both small and large lipid droplet-containing hepatocytes. In addition to its role in lipid droplet fusion, also involved in cytoplasmic vesicle biogenesis and transport. Required for very-low-density lipoprotein (VLDL) lipidation and maturation. Probably involved in the biogenesis of VLDL transport vesicles by forming a COPII vesicle coat and facilitating the formation of endoplasmic reticulum-derived large vesicles. Also involved in sterol-regulated export of the SCAP-SREBP complex, composed of SCAP, SREBF1/SREBP1 and SREBF2/SREBP2, by promoting loading of SCAP-SREBP into COPII vesicles. May also activate apoptosis. This chain is Lipid transferase CIDEB (CIDEB), found in Bos taurus (Bovine).